The primary structure comprises 69 residues: Large ribosomal subunit protein bL31 (69 aa).

Positions 17, 19, 37, and 40 each coordinate Zn(2+).

This sequence belongs to the bacterial ribosomal protein bL31 family. Type A subfamily. In terms of assembly, part of the 50S ribosomal subunit. Zn(2+) is required as a cofactor.

Its function is as follows. Binds the 23S rRNA. The polypeptide is Large ribosomal subunit protein bL31 (Clostridium botulinum (strain Eklund 17B / Type B)).